We begin with the raw amino-acid sequence, 35 residues long: MNYFIMDKTFLEQEILLPQFIIQNIERWFKTHNFV.

This is an uncharacterized protein from Haemophilus influenzae (strain ATCC 51907 / DSM 11121 / KW20 / Rd).